We begin with the raw amino-acid sequence, 2275 residues long: Serine-rich adhesin for platelets (2275 aa).

The N-terminal stretch at 1-89 (MSKRQKEFHD…VNMLHDQQAF (89 aa)) is a signal peptide. Residues 90–264 (AASDAPLTSE…TANTITVNKD (175 aa)) form a serine-rich repeat region 1, SRR1 region. Residues 100–111 (LNTQSETVGNQN) are compositionally biased toward polar residues. Disordered regions lie at residues 100 to 229 (LNTQ…STST) and 751 to 2247 (NSMS…GLLG). Residues 112-128 (STTIEASTSTADSTSVT) show a composition bias toward low complexity. Over residues 129–140 (KNSSSVQTSNSD) the composition is skewed to polar residues. Residues 150–229 (VTSTTNSTSN…NKTSTTSTST (80 aa)) show a composition bias toward low complexity. Residues 265-751 (NLKQYMTTSG…TTFKYEVTRN (487 aa)) are non-repeat region (NRR). Composition is skewed to low complexity over residues 752–1392 (SMSD…LSLS) and 1402–2218 (SNSA…ATSE). The segment at 752 to 2236 (SMSDSVSTSG…AQSEKRLPDT (1485 aa)) is serine-rich repeat region 2, SRR2. The LPXTG sorting signal motif lies at 2233–2237 (LPDTG). At Thr-2236 the chain carries Pentaglycyl murein peptidoglycan amidated threonine. Residues 2237 to 2275 (GDSIKQNGLLGGVMTLLVGLGLMKRKKKKDENDQDDSQA) constitute a propeptide, removed by sortase.

The protein belongs to the serine-rich repeat protein (SRRP) family. As to quaternary structure, interacts with human gp-340 (DMBT1). Post-translationally, proteolytically cleaved by a metalloprotease. In terms of processing, glycosylated. It is probable that most of the Ser residues in SSR1 and SSR2 are O-GlcNAcylated. Sequential glycosylation by sugar transferases are able to generate complex sugar polymorphisms.

The protein resides in the secreted. The protein localises to the cell wall. Mediates binding to human platelets, possibly through a receptor-ligand interaction. Probably associated with virulence in endovascular infection. Interacts with host (human) gp-340 via the non-repeat region (NRR or binding region). Binding is inhibited by N-acetylneuraminic acid (NeuAc). This Staphylococcus aureus (strain MW2) protein is Serine-rich adhesin for platelets (sraP).